Consider the following 318-residue polypeptide: tRNA methyltransferase 10 homolog B (318 aa).

Over residues 1-10 (MDCKSEESAQ) the composition is skewed to basic and acidic residues. The tract at residues 1–105 (MDCKSEESAQ…DPGNGTCPQH (105 aa)) is disordered. The span at 52 to 63 (SPANSAVWSSKN) shows a compositional bias: polar residues. The span at 64–83 (MQRKQRHWERIVSSKKSKRK) shows a compositional bias: basic residues. The stretch at 72-93 (ERIVSSKKSKRKQERERRKAKR) forms a coiled coil. Residues 84–96 (QERERRKAKRAED) are compositionally biased toward basic and acidic residues. An SAM-dependent MTase TRM10-type domain is found at 114–311 (TKEKLLEAKH…KGVSPGKGYV (198 aa)).

Belongs to the class IV-like SAM-binding methyltransferase superfamily. TRM10 family.

The catalysed reaction is guanosine(9) in tRNA + S-adenosyl-L-methionine = N(1)-methylguanosine(9) in tRNA + S-adenosyl-L-homocysteine + H(+). Functionally, S-adenosyl-L-methionine-dependent guanine N(1)-methyltransferase that catalyzes the formation of N(1)-methylguanine at position 9 (m1G9) in tRNAs. Probably not able to catalyze formation of N(1)-methyladenine at position 9 (m1A9) in tRNAs. The polypeptide is tRNA methyltransferase 10 homolog B (Trmt10b) (Mus musculus (Mouse)).